Reading from the N-terminus, the 20-residue chain is Short cationic peptide-4b (20 aa).

Glu-20 carries the post-translational modification Glutamic acid 1-amide.

In terms of tissue distribution, expressed by the venom gland.

It localises to the secreted. The polypeptide is Short cationic peptide-4b (Cupiennius salei (American wandering spider)).